We begin with the raw amino-acid sequence, 460 residues long: Putative type II methyltransferase M.OihORF3336P (460 aa).

One can recognise an SAM-dependent MTase C5-type domain in the interval 15–458 (PEVVDLFSGC…EAMKKNIQGG (444 aa)). Residue Cys97 is part of the active site.

The protein belongs to the class I-like SAM-binding methyltransferase superfamily. C5-methyltransferase family.

It carries out the reaction a 2'-deoxycytidine in DNA + S-adenosyl-L-methionine = a 5-methyl-2'-deoxycytidine in DNA + S-adenosyl-L-homocysteine + H(+). Functionally, a methylase, recognizes the double-stranded sequence 5'-ACCGGT-3', methylates C-? on both strands. No endonuclease has been identified for this methylase. In Oceanobacillus iheyensis (strain DSM 14371 / CIP 107618 / JCM 11309 / KCTC 3954 / HTE831), this protein is Putative type II methyltransferase M.OihORF3336P.